The following is a 2355-amino-acid chain: Acetyl-CoA carboxylase 2 (2355 aa).

Positions Pro138–Ala645 constitute a Biotin carboxylation domain. The ATP-grasp domain occupies Gly291–Ile485. Position 317 to 374 (Cys317 to Leu374) interacts with ATP. Mg(2+) contacts are provided by Glu440, Glu454, and Asn456. 3 residues coordinate Mn(2+): Glu440, Glu454, and Asn456. The active site involves Arg458. A Biotinyl-binding domain is found at Leu772 to Asp846. Position 813 is an N6-biotinyllysine (Lys813). Thr1133 bears the Phosphothreonine mark. Ser1293 is modified (phosphoserine). One can recognise a CoA carboxyltransferase N-terminal domain in the interval Gln1593–Ala1932. Residues Gln1593–Lys2251 form a carboxyltransferase region. Positions 1841, 2142, and 2144 each coordinate CoA. The CoA carboxyltransferase C-terminal domain maps to Pro1936–Lys2251.

In terms of assembly, homodimer. Biotin serves as cofactor. The cofactor is Mg(2+). It depends on Mn(2+) as a cofactor. Widely expressed at low levels.

It is found in the cytoplasm. The protein localises to the cytosol. The catalysed reaction is hydrogencarbonate + acetyl-CoA + ATP = malonyl-CoA + ADP + phosphate + H(+). The enzyme catalyses N(6)-biotinyl-L-lysyl-[protein] + hydrogencarbonate + ATP = N(6)-carboxybiotinyl-L-lysyl-[protein] + ADP + phosphate + H(+). The protein operates within lipid metabolism; malonyl-CoA biosynthesis; malonyl-CoA from acetyl-CoA: step 1/1. Multifunctional enzyme that catalyzes the carboxylation of acetyl-CoA, forming malonyl-CoA, which is used in the plastid for fatty acid synthesis and in the cytosol in various biosynthetic pathways including fatty acid elongation. The sequence is that of Acetyl-CoA carboxylase 2 (ACC2) from Arabidopsis thaliana (Mouse-ear cress).